Here is a 658-residue protein sequence, read N- to C-terminus: Phosphomethylpyrimidine synthase (658 aa).

The interval Met-1–Glu-22 is disordered. Residues Asn-248, Met-277, Tyr-306, His-342, Ser-362–Gly-364, Asp-403–Arg-406, and Glu-442 contribute to the substrate site. His-446 serves as a coordination point for Zn(2+). A substrate-binding site is contributed by Tyr-469. His-510 lines the Zn(2+) pocket. Residues Cys-590, Cys-593, and Cys-598 each contribute to the [4Fe-4S] cluster site.

The protein belongs to the ThiC family. In terms of assembly, homodimer. Requires [4Fe-4S] cluster as cofactor.

The enzyme catalyses 5-amino-1-(5-phospho-beta-D-ribosyl)imidazole + S-adenosyl-L-methionine = 4-amino-2-methyl-5-(phosphooxymethyl)pyrimidine + CO + 5'-deoxyadenosine + formate + L-methionine + 3 H(+). It participates in cofactor biosynthesis; thiamine diphosphate biosynthesis. In terms of biological role, catalyzes the synthesis of the hydroxymethylpyrimidine phosphate (HMP-P) moiety of thiamine from aminoimidazole ribotide (AIR) in a radical S-adenosyl-L-methionine (SAM)-dependent reaction. The sequence is that of Phosphomethylpyrimidine synthase from Colwellia psychrerythraea (strain 34H / ATCC BAA-681) (Vibrio psychroerythus).